The following is a 261-amino-acid chain: Putative [LysW]-aminoadipate/[LysW]-glutamate kinase (261 aa).

Substrate is bound by residues 35-36, R62, and N162; that span reads GG.

This sequence belongs to the acetylglutamate kinase family. LysZ subfamily.

The protein localises to the cytoplasm. The enzyme catalyses [amino-group carrier protein]-C-terminal-N-(1,4-dicarboxybutan-1-yl)-L-glutamine + ATP = [amino-group carrier protein]-C-terminal-N-(1-carboxy-5-phosphooxy-5-oxopentan-1-yl)-L-glutamine + ADP. It carries out the reaction [amino-group carrier protein]-C-terminal-gamma-(L-glutamyl)-L-glutamate + ATP = [amino-group carrier protein]-C-terminal-gamma-(5-phospho-L-glutamyl)-L-glutamate + ADP. It functions in the pathway amino-acid biosynthesis; L-lysine biosynthesis via AAA pathway; L-lysine from L-alpha-aminoadipate (Thermus route): step 2/5. The protein operates within amino-acid biosynthesis; L-arginine biosynthesis. Functionally, involved in both the arginine and lysine biosynthetic pathways. Phosphorylates the LysW-bound precursors glutamate (for arginine biosynthesis), respectively alpha-aminoadipate (for lysine biosynthesis). The sequence is that of Putative [LysW]-aminoadipate/[LysW]-glutamate kinase from Pyrobaculum aerophilum (strain ATCC 51768 / DSM 7523 / JCM 9630 / CIP 104966 / NBRC 100827 / IM2).